The primary structure comprises 296 residues: Chronophin (296 aa).

The Nucleophile role is filled by Asp25. Mg(2+)-binding residues include Asp25 and Asn27. Asn27 functions as the Proton donor in the catalytic mechanism. Substrate is bound by residues 58–60 (SNN), His182, and Lys213. Asp238 lines the Mg(2+) pocket.

This sequence belongs to the HAD-like hydrolase superfamily. In terms of assembly, homodimer. The cofactor is Mg(2+). In terms of tissue distribution, detected in brain (at protein level).

The protein localises to the cytoplasm. Its subcellular location is the cytosol. The protein resides in the cytoskeleton. It localises to the cell projection. It is found in the ruffle membrane. The protein localises to the lamellipodium membrane. Its subcellular location is the cell membrane. The catalysed reaction is pyridoxal 5'-phosphate + H2O = pyridoxal + phosphate. The enzyme catalyses pyridoxine 5'-phosphate + H2O = pyridoxine + phosphate. It catalyses the reaction pyridoxamine + phosphate = pyridoxamine 5'-phosphate + H2O. It carries out the reaction O-phospho-L-seryl-[protein] + H2O = L-seryl-[protein] + phosphate. In terms of biological role, functions as a pyridoxal phosphate (PLP) phosphatase, which also catalyzes the dephosphorylation of pyridoxine 5'-phosphate (PNP) and pyridoxamine 5'-phosphate (PMP), with order of substrate preference PLP &gt; PNP &gt; PMP and therefore plays a role in vitamin B6 metabolism. Also functions as a protein serine phosphatase that specifically dephosphorylates 'Ser-3' in proteins of the actin-depolymerizing factor (ADF)/cofilin family like CFL1 and DSTN. Thereby, regulates cofilin-dependent actin cytoskeleton reorganization, being required for normal progress through mitosis and normal cytokinesis. Does not dephosphorylate phosphothreonines in LIMK1. Does not dephosphorylate peptides containing phosphotyrosine. This chain is Chronophin, found in Bos taurus (Bovine).